A 445-amino-acid chain; its full sequence is tRNA modification GTPase MnmE (445 aa).

(6S)-5-formyl-5,6,7,8-tetrahydrofolate is bound by residues Arg21, Glu78, and Lys117. The TrmE-type G domain occupies 213–370; the sequence is GFRIALVGAP…LKETLSERVV (158 aa). GTP-binding positions include 223-228, 242-248, and 267-270; these read NAGKST, TATPGTT, and DTAG. The Mg(2+) site is built by Ser227 and Thr248. Lys445 lines the (6S)-5-formyl-5,6,7,8-tetrahydrofolate pocket.

This sequence belongs to the TRAFAC class TrmE-Era-EngA-EngB-Septin-like GTPase superfamily. TrmE GTPase family. As to quaternary structure, homodimer. Heterotetramer of two MnmE and two MnmG subunits. Requires K(+) as cofactor.

It is found in the cytoplasm. Exhibits a very high intrinsic GTPase hydrolysis rate. Involved in the addition of a carboxymethylaminomethyl (cmnm) group at the wobble position (U34) of certain tRNAs, forming tRNA-cmnm(5)s(2)U34. The sequence is that of tRNA modification GTPase MnmE from Phenylobacterium zucineum (strain HLK1).